Reading from the N-terminus, the 106-residue chain is UPF0145 protein APL_0465 (106 aa).

It belongs to the UPF0145 family.

The polypeptide is UPF0145 protein APL_0465 (Actinobacillus pleuropneumoniae serotype 5b (strain L20)).